Consider the following 156-residue polypeptide: Arginine repressor (156 aa).

It belongs to the ArgR family.

It localises to the cytoplasm. It participates in amino-acid biosynthesis; L-arginine biosynthesis [regulation]. Functionally, regulates arginine biosynthesis genes. The protein is Arginine repressor of Photorhabdus laumondii subsp. laumondii (strain DSM 15139 / CIP 105565 / TT01) (Photorhabdus luminescens subsp. laumondii).